Reading from the N-terminus, the 371-residue chain is tRNA-specific 2-thiouridylase MnmA (371 aa).

Residues 13 to 20 and methionine 39 each bind ATP; that span reads GMSGGVDS. The tract at residues 99 to 101 is interaction with target base in tRNA; that stretch reads NPD. The active-site Nucleophile is the cysteine 104. Cysteines 104 and 200 form a disulfide. Residue glycine 128 coordinates ATP. The interval 150–152 is interaction with tRNA; sequence KDQ. The Cysteine persulfide intermediate role is filled by cysteine 200. Residues 308–309 form an interaction with tRNA region; sequence RY.

The protein belongs to the MnmA/TRMU family.

The protein localises to the cytoplasm. The catalysed reaction is S-sulfanyl-L-cysteinyl-[protein] + uridine(34) in tRNA + AH2 + ATP = 2-thiouridine(34) in tRNA + L-cysteinyl-[protein] + A + AMP + diphosphate + H(+). In terms of biological role, catalyzes the 2-thiolation of uridine at the wobble position (U34) of tRNA, leading to the formation of s(2)U34. The sequence is that of tRNA-specific 2-thiouridylase MnmA from Bacillus anthracis.